The primary structure comprises 692 residues: Peroxisomal primary amine oxidase (692 aa).

Residues 1-22 (MERLRQIASQATAASAAPARPA) show a composition bias toward low complexity. The segment at 1–26 (MERLRQIASQATAASAAPARPAHPLD) is disordered. Residue asparagine 243 is glycosylated (N-linked (GlcNAc...) asparagine). A substrate-binding site is contributed by 317–328 (ALDIGEYGAGYM). Aspartate 319 functions as the Proton acceptor in the catalytic mechanism. An intrachain disulfide couples cysteine 338 to cysteine 364. Residue 402–407 (AANYEY) coordinates substrate. Tyrosine 405 functions as the Schiff-base intermediate with substrate; via topaquinone in the catalytic mechanism. Residue tyrosine 405 is modified to 2',4',5'-topaquinone. Residues histidine 456 and histidine 458 each coordinate Cu cation. The Mn(2+) site is built by aspartate 465, aspartate 613, and isoleucine 614. Cu cation is bound at residue histidine 624.

It belongs to the copper/topaquinone oxidase family. Homodimer. Requires Cu cation as cofactor. It depends on Zn(2+) as a cofactor. L-topaquinone is required as a cofactor. Mn(2+) serves as cofactor. In terms of processing, topaquinone (TPQ) is generated by copper-dependent autoxidation of a specific tyrosyl residue.

It localises to the peroxisome. The enzyme catalyses a primary methyl amine + O2 + H2O = an aldehyde + H2O2 + NH4(+). This is Peroxisomal primary amine oxidase (AMO) from Pichia angusta (Yeast).